Reading from the N-terminus, the 377-residue chain is uncharacterized protein (377 aa).

The stretch at 309-375 (NIISVDKIKE…ISNLNKKLKK (67 aa)) forms a coiled coil.

The protein belongs to the mimivirus L5 family.

This is an uncharacterized protein from Acanthamoeba polyphaga (Amoeba).